Consider the following 127-residue polypeptide: Fluoride-specific ion channel FluC (127 aa).

The next 4 membrane-spanning stretches (helical) occupy residues 8 to 28, 37 to 57, 68 to 88, and 100 to 120; these read LLIA…QYWF, PWGT…VYAI, WKFL…TFSY, and ILFL…AFAG. Residues G78 and T81 each contribute to the Na(+) site.

It belongs to the fluoride channel Fluc/FEX (TC 1.A.43) family.

It is found in the cell inner membrane. The enzyme catalyses fluoride(in) = fluoride(out). Na(+) is not transported, but it plays an essential structural role and its presence is essential for fluoride channel function. Its function is as follows. Fluoride-specific ion channel. Important for reducing fluoride concentration in the cell, thus reducing its toxicity. The chain is Fluoride-specific ion channel FluC from Leptospira interrogans serogroup Icterohaemorrhagiae serovar Lai (strain 56601).